The sequence spans 256 residues: Non-specific lipid transfer protein GPI-anchored 23 (256 aa).

Positions 1–21 (MKPSFVLLSIVLLLSSSLSDA) are cleaved as a signal peptide. N-linked (GlcNAc...) asparagine glycosylation occurs at N41. Intrachain disulfides connect C45–C88, C55–C72, C73–C113, and C86–C121. The tract at residues 125–230 (TPAASTPVSP…SPSPSPSPSI (106 aa)) is disordered. Residues 138-230 (SPTTSPSSAK…SPSPSPSPSI (93 aa)) are compositionally biased toward low complexity. Residue S225 is the site of GPI-anchor amidated serine attachment. Positions 226–256 (PSPSISSSGILLVSKLFIAVVMVSSFLYILA) are cleaved as a propeptide — removed in mature form.

The protein belongs to the plant LTP family. In terms of tissue distribution, confined to the anthers of the inflorescence.

It localises to the cell membrane. In terms of biological role, probable lipid transfer protein. The polypeptide is Non-specific lipid transfer protein GPI-anchored 23 (Arabidopsis thaliana (Mouse-ear cress)).